The primary structure comprises 147 residues: Ponticulin-like protein C5 (147 aa).

Positions 1 to 20 (MKLNNSLLLLIVAIIASSNA) are cleaved as a signal peptide. The GPI-like-anchor amidated asparagine moiety is linked to residue asparagine 118. The N-linked (GlcNAc...) asparagine glycan is linked to asparagine 118. A propeptide spans 119–147 (SSESDSSDSTRIGASFALFALALLSMLAL) (removed in mature form).

This sequence belongs to the ponticulin family. Post-translationally, the GPI-like-anchor contains a phosphoceramide group, rather than a phosphatidyl group.

The protein resides in the cell membrane. This is Ponticulin-like protein C5 (ponC5) from Dictyostelium discoideum (Social amoeba).